A 110-amino-acid polypeptide reads, in one-letter code: UPF0060 membrane protein MMAR_2961 (110 aa).

The next 4 membrane-spanning stretches (helical) occupy residues 6–26, 32–52, 61–81, and 90–110; these read ILLF…VWQG, GLAW…VATL, ILAA…MAFD, and IVGA…PRAH.

It belongs to the UPF0060 family.

The protein resides in the cell membrane. The chain is UPF0060 membrane protein MMAR_2961 from Mycobacterium marinum (strain ATCC BAA-535 / M).